We begin with the raw amino-acid sequence, 133 residues long: MSLSDPIADFLTRLRNGQAGMNKVVYVPCSKVVMAVLRILVEEGYIESFTEEVRGDSGIKVLKVFLKYFNSAAAIRKIVRVSRPGKRVYSSADKMPRFYNALGIYIVSTSKGIMLDSHARNAGVGGEILCGVF.

It belongs to the universal ribosomal protein uS8 family. Part of the 30S ribosomal subunit. Contacts proteins S5 and S12.

In terms of biological role, one of the primary rRNA binding proteins, it binds directly to 16S rRNA central domain where it helps coordinate assembly of the platform of the 30S subunit. The polypeptide is Small ribosomal subunit protein uS8 (Anaplasma phagocytophilum (strain HZ)).